A 1012-amino-acid chain; its full sequence is Structural polyprotein (1012 aa).

A divalent metal cation is bound at residue Asp30. One can recognise a Peptidase S50 domain in the interval Ala513 to Ala755. The active-site Nucleophile is the Ser652. The active site involves Lys692. The disordered stretch occupies residues Glu971–Glu1012. Basic residues predominate over residues Arg975 to Pro986. The segment at Ile1003–Glu1012 is interaction with VP1 protein.

In terms of assembly, homotrimer. A central divalent metal stabilizes the VP2 trimer. Interacts with host ITGA4/ITGB1. As to quaternary structure, homodimer. Interacts (via C-terminus) with VP1 in the cytoplasm. Interacts with VP2. Post-translationally, specific enzymatic cleavages yield mature proteins. The capsid assembly seems to be regulated by polyprotein processing. The protease VP4 cleaves itself off the polyprotein, thus releasing pre-VP2 and VP3 within the infected cell. During capsid assembly, the C-terminus of pre-VP2 is further processed by VP4, giving rise to VP2, the external capsid protein and three small peptides that all stay closely associated with the capsid.

Its subcellular location is the virion. The protein resides in the host cytoplasm. Capsid protein VP2 self assembles to form an icosahedral capsid with a T=13 symmetry, about 70 nm in diameter, and consisting of 260 VP2 trimers. The capsid encapsulates the genomic dsRNA. VP2 is also involved in attachment and entry into the host cell by interacting with host ITGA4/ITGB1. In terms of biological role, the precursor of VP2 plays an important role in capsid assembly. First, pre-VP2 and VP2 oligomers assemble to form a procapsid. Then, the pre-VP2 intermediates may be processed into VP2 proteins by proteolytic cleavage mediated by VP4 to obtain the mature virion. The final capsid is composed of pentamers and hexamers but VP2 has a natural tendency to assemble into all-pentameric structures. Therefore pre-VP2 may be required to allow formation of the hexameric structures. Functionally, protease VP4 is a serine protease that cleaves the polyprotein into its final products. Pre-VP2 is first partially cleaved, and may be completely processed by VP4 upon capsid maturation. Its function is as follows. Capsid protein VP3 plays a key role in virion assembly by providing a scaffold for the capsid made of VP2. May self-assemble to form a T=4-like icosahedral inner-capsid composed of at least 180 trimers. Plays a role in genomic RNA packaging by recruiting VP1 into the capsid and interacting with the dsRNA genome segments to form a ribonucleoprotein complex. Additionally, the interaction of the VP3 C-terminal tail with VP1 removes the inherent structural blockade of the polymerase active site. Thus, VP3 can also function as a transcriptional activator. Structural peptide 1 is a small peptide derived from pre-VP2 C-terminus. It destabilizes and perforates cell membranes, suggesting a role during entry. In terms of biological role, structural peptide 2 is a small peptide derived from pre-VP2 C-terminus. It is not essential for the virus viability, but viral growth is affected when missing. Functionally, structural peptide 3 is a small peptide derived from pre-VP2 C-terminus. It is not essential for the virus viability, but viral growth is affected when missing. The sequence is that of Structural polyprotein from Avian infectious bursal disease virus (isolate Chicken/UK/UK661/1989) (IBDV).